A 430-amino-acid polypeptide reads, in one-letter code: Adenylosuccinate synthetase (430 aa).

GTP is bound by residues 12-18 (GDEGKGK) and 40-42 (GHT). Aspartate 13 functions as the Proton acceptor in the catalytic mechanism. The Mg(2+) site is built by aspartate 13 and glycine 40. IMP is bound by residues 13-16 (DEGK), 38-41 (NAGH), threonine 128, arginine 142, glutamine 223, threonine 238, and arginine 302. The active-site Proton donor is histidine 41. 298–304 (TTTGRPR) lines the substrate pocket. GTP is bound by residues arginine 304, 330 to 332 (LLD), and 412 to 414 (SVG).

It belongs to the adenylosuccinate synthetase family. As to quaternary structure, homodimer. It depends on Mg(2+) as a cofactor.

The protein localises to the cytoplasm. It catalyses the reaction IMP + L-aspartate + GTP = N(6)-(1,2-dicarboxyethyl)-AMP + GDP + phosphate + 2 H(+). It participates in purine metabolism; AMP biosynthesis via de novo pathway; AMP from IMP: step 1/2. Plays an important role in the de novo pathway of purine nucleotide biosynthesis. Catalyzes the first committed step in the biosynthesis of AMP from IMP. This is Adenylosuccinate synthetase from Listeria welshimeri serovar 6b (strain ATCC 35897 / DSM 20650 / CCUG 15529 / CIP 8149 / NCTC 11857 / SLCC 5334 / V8).